The following is a 464-amino-acid chain: Cyclic 2,3-diphosphoglycerate synthetase (464 aa).

This sequence belongs to the cyclic 2,3-diphosphoglycerate synthetase family.

Its subcellular location is the cytoplasm. It carries out the reaction (2R)-2,3-bisphosphoglycerate + ATP + H(+) = cyclic (2R)-2,3-bisphosphoglycerate + ADP + phosphate. Activity decreases in response to phosphate limitation. In terms of biological role, catalyzes the formation of cyclic 2,3-diphosphoglycerate (cDPG) by formation of an intramolecular phosphoanhydride bond at the expense of ATP. Not able to catalyze cDPG hydrolysis. May be involved in osmotic balance. In Methanothermobacter thermautotrophicus (strain ATCC 29096 / DSM 1053 / JCM 10044 / NBRC 100330 / Delta H) (Methanobacterium thermoautotrophicum), this protein is Cyclic 2,3-diphosphoglycerate synthetase (cpgS).